Here is a 692-residue protein sequence, read N- to C-terminus: MARKTPLNRIRNIGIAAHIDAGKTTTSERILFYTGVSHKIGEVHDGAATMDWMEQEKERGITITSAATTCFWKDHQINLIDTPGHVDFTIEVERSMRVLDGAVSVFCSVGGVQPQSETVWRQANKYGVPRIVFVNKMDRIGANFYNVENQIKLRLKANPVPINIPIGAEDTFIGVIDLVQMKAIVWNNETMGAKYDVEEIPSDLLEKAKEYREKLVEAVAEQDEALMEKYLGGEELSIEEIKKGIKAGCLNMSLVPMLCGSSFKNKGVQTLLDAVIDYLPAPTEVVDIKGIDPKTEEEVFVKSSDDGEFAGLAFKIMTDPFVGQLTFVRVYRGKLESGSYVYNSTKDKKERVGRLLKMHSNKREDIKEVYAGEICAFVGLKDTLTGDTLCDEKNAVVLERMEFPEPVIHIAVEPKTKADQEKMGVALGKLAEEDPSFRVMTQEETGQTLIGGMGELHLEIIVDRLKREFKVEAEIGQPQVAFRETIRSSVSKEHKYAKQSGGRGQYGHVFIKLEPKEPGSGYEFVNEISGGVIPKEYIPAVDKGIQEAMQNGVLAGYPVVDFKVTLYDGSYHDVDSSEMAFKIAGSMAFKEASRAANPVLLEPMMKVEVEVPEEYMGDVIGDLNRRRGQINSMDDRLGLKIVNAFVPLVEMFGYSTDLRSATQGRGTYSMEFDHYGEVPSNIAKEIVEKRKG.

Residues 8–283 (NRIRNIGIAA…AVIDYLPAPT (276 aa)) enclose the tr-type G domain. GTP contacts are provided by residues 17–24 (AHIDAGKT), 81–85 (DTPGH), and 135–138 (NKMD).

Belongs to the TRAFAC class translation factor GTPase superfamily. Classic translation factor GTPase family. EF-G/EF-2 subfamily.

The protein resides in the cytoplasm. Functionally, catalyzes the GTP-dependent ribosomal translocation step during translation elongation. During this step, the ribosome changes from the pre-translocational (PRE) to the post-translocational (POST) state as the newly formed A-site-bound peptidyl-tRNA and P-site-bound deacylated tRNA move to the P and E sites, respectively. Catalyzes the coordinated movement of the two tRNA molecules, the mRNA and conformational changes in the ribosome. In Helicobacter pylori (strain ATCC 700392 / 26695) (Campylobacter pylori), this protein is Elongation factor G (fusA).